We begin with the raw amino-acid sequence, 300 residues long: Ubiquinone biosynthesis protein COQ4, mitochondrial (300 aa).

Zn(2+) contacts are provided by His-173, Asp-174, His-177, and Glu-189.

Belongs to the COQ4 family. In terms of assembly, component of a multi-subunit COQ enzyme complex, composed of at least COQ3, COQ4, COQ5, COQ6, COQ7 and COQ9. It depends on Zn(2+) as a cofactor.

The protein localises to the mitochondrion inner membrane. It carries out the reaction a 4-hydroxy-3-methoxy-5-(all-trans-polyprenyl)benzoate + H(+) = a 2-methoxy-6-(all-trans-polyprenyl)phenol + CO2. Its pathway is cofactor biosynthesis; ubiquinone biosynthesis. Its function is as follows. Lyase that catalyzes the C1-decarboxylation of 4-hydroxy-3-methoxy-5-(all-trans-polyprenyl)benzoic acid into 2-methoxy-6-(all-trans-polyprenyl)phenol during ubiquinone biosynthesis. This chain is Ubiquinone biosynthesis protein COQ4, mitochondrial, found in Cryptococcus neoformans var. neoformans serotype D (strain B-3501A) (Filobasidiella neoformans).